Here is a 292-residue protein sequence, read N- to C-terminus: 4,5:9,10-diseco-3-hydroxy-5,9,17-trioxoandrosta-1(10),2-diene-4-oate hydrolase (292 aa).

Residues 44 to 45, Asn53, Asn113, and Arg192 contribute to the substrate site; that span reads GG. Residue His269 is the Proton acceptor of the active site. Trp270 contributes to the substrate binding site.

It belongs to the AB hydrolase superfamily. HsaD family. In terms of assembly, homodimer.

The enzyme catalyses (1E,2Z)-3-hydroxy-5,9,17-trioxo-4,5:9,10-disecoandrosta-1(10),2-dien-4-oate + H2O = 3-[(3aS,4S,7aS)-7a-methyl-1,5-dioxo-octahydro-1H-inden-4-yl]propanoate + (2Z,4Z)-2-hydroxyhexa-2,4-dienoate + H(+). The protein operates within lipid metabolism; steroid biosynthesis. In terms of biological role, catalyzes the hydrolysis of a carbon-carbon bond in 4,5: 9,10-diseco-3-hydroxy-5,9,17-trioxoandrosta-1(10),2-diene-4-oate (4,9-DSHA) to yield 9,17-dioxo-1,2,3,4,10,19-hexanorandrostan-5-oate (DOHNAA) and 2-hydroxy-hexa-2,4-dienoate (HHD). Also involved in biphenyl and polychlorinated biphenyls (PCBs) degradation. This Rhodococcus jostii (strain RHA1) protein is 4,5:9,10-diseco-3-hydroxy-5,9,17-trioxoandrosta-1(10),2-diene-4-oate hydrolase (hsaD).